A 142-amino-acid polypeptide reads, in one-letter code: Large ribosomal subunit protein uL16 (142 aa).

This sequence belongs to the universal ribosomal protein uL16 family. As to quaternary structure, part of the 50S ribosomal subunit.

Its function is as follows. Binds 23S rRNA and is also seen to make contacts with the A and possibly P site tRNAs. The sequence is that of Large ribosomal subunit protein uL16 from Thermotoga neapolitana (strain ATCC 49049 / DSM 4359 / NBRC 107923 / NS-E).